The primary structure comprises 144 residues: Large ribosomal subunit protein uL13 (144 aa).

It belongs to the universal ribosomal protein uL13 family. Part of the 50S ribosomal subunit.

Functionally, this protein is one of the early assembly proteins of the 50S ribosomal subunit, although it is not seen to bind rRNA by itself. It is important during the early stages of 50S assembly. This chain is Large ribosomal subunit protein uL13, found in Clostridium kluyveri (strain NBRC 12016).